Here is a 72-residue protein sequence, read N- to C-terminus: Cold shock-like protein CspD (72 aa).

In terms of domain architecture, CSD spans 4–64 (GIVKWFNNAK…SDKGSHATKI (61 aa)).

It localises to the cytoplasm. This chain is Cold shock-like protein CspD (cspD), found in Haemophilus influenzae (strain ATCC 51907 / DSM 11121 / KW20 / Rd).